The primary structure comprises 529 residues: Bifunctional purine biosynthesis protein PurH (529 aa).

The 148-residue stretch at 2–149 (TNLVPVGRAL…KNHRFVNVVT (148 aa)) folds into the MGS-like domain.

This sequence belongs to the PurH family.

It catalyses the reaction (6R)-10-formyltetrahydrofolate + 5-amino-1-(5-phospho-beta-D-ribosyl)imidazole-4-carboxamide = 5-formamido-1-(5-phospho-D-ribosyl)imidazole-4-carboxamide + (6S)-5,6,7,8-tetrahydrofolate. It carries out the reaction IMP + H2O = 5-formamido-1-(5-phospho-D-ribosyl)imidazole-4-carboxamide. The protein operates within purine metabolism; IMP biosynthesis via de novo pathway; 5-formamido-1-(5-phospho-D-ribosyl)imidazole-4-carboxamide from 5-amino-1-(5-phospho-D-ribosyl)imidazole-4-carboxamide (10-formyl THF route): step 1/1. It functions in the pathway purine metabolism; IMP biosynthesis via de novo pathway; IMP from 5-formamido-1-(5-phospho-D-ribosyl)imidazole-4-carboxamide: step 1/1. The sequence is that of Bifunctional purine biosynthesis protein PurH from Cereibacter sphaeroides (strain ATCC 17025 / ATH 2.4.3) (Rhodobacter sphaeroides).